Reading from the N-terminus, the 805-residue chain is Sucrose synthase 1 (805 aa).

A GT-B glycosyltransferase region spans residues 274-751; that stretch reads MVFNVVILSP…GLQRIYEKYT (478 aa).

Belongs to the glycosyltransferase 1 family. Plant sucrose synthase subfamily.

The catalysed reaction is an NDP-alpha-D-glucose + D-fructose = a ribonucleoside 5'-diphosphate + sucrose + H(+). Sucrose-cleaving enzyme that provides UDP-glucose and fructose for various metabolic pathways. The sequence is that of Sucrose synthase 1 from Tulipa gesneriana (Garden tulip).